Consider the following 228-residue polypeptide: MRKKRVITCVMAASLTLGSLLPAGYATAKEDSKTTPSYEELALHYKMKSEKISSNGKLVEIEYVSGNETHKVQMNGNDHTVKVDGIEQKGLNFEYDENAANRTNYENNNLKSNEFTTQAAKPKKGYHYVGTLSGHTKAAKNALSVTMSLVGIVPGLGWGSKAATILFSYWAKEQIPDAYYKYDLYEKGAMTDSWYQYATVQFFEDKAHKKKMGKPWTSTPAKVDLPNS.

The signal sequence occupies residues 1-28; it reads MRKKRVITCVMAASLTLGSLLPAGYATA.

The sequence is that of SPbeta prophage-derived uncharacterized protein YomL (yomL) from Bacillus subtilis (strain 168).